Consider the following 877-residue polypeptide: Alanine--tRNA ligase (877 aa).

The Zn(2+) site is built by histidine 563, histidine 567, cysteine 667, and histidine 671.

This sequence belongs to the class-II aminoacyl-tRNA synthetase family. The cofactor is Zn(2+).

It localises to the cytoplasm. The catalysed reaction is tRNA(Ala) + L-alanine + ATP = L-alanyl-tRNA(Ala) + AMP + diphosphate. Catalyzes the attachment of alanine to tRNA(Ala) in a two-step reaction: alanine is first activated by ATP to form Ala-AMP and then transferred to the acceptor end of tRNA(Ala). Also edits incorrectly charged Ser-tRNA(Ala) and Gly-tRNA(Ala) via its editing domain. The polypeptide is Alanine--tRNA ligase (Cytophaga hutchinsonii (strain ATCC 33406 / DSM 1761 / CIP 103989 / NBRC 15051 / NCIMB 9469 / D465)).